Reading from the N-terminus, the 767-residue chain is MKTPWKVLLGLLGVAALVTIITVPVVLLNKDEAAADSRRTYTLADYLKNTFRVKSYSLRWVSDSEYLYKQENNILLFNAEHGNSSIFLENSTFEIFGDSISDYSVSPDRLFVLLEYNYVKQWRHSYTASYSIYDLNKRQLITEEKIPNNTQWITWSQEGHKLAYVWKNDIYVKIEPHLPSHRITSTGKENVIFNGINDWVYEEEIFGAYSALWWSPNGTFLAYAQFNDTGVPLIEYSFYSDESLQYPKTVWIPYPKAGAVNPTVKFFIVNTDSLSSTTTTIPMQITAPASVTTGDHYLCDVAWVSEDRISLQWLRRIQNYSVMAICDYDKTTLVWNCPTTQEHIETSATGWCGRFRPAEPHFTSDGSSFYKIVSDKDGYKHICQFQKDRKPEQVCTFITKGAWEVISIEALTSDYLYYISNEYKEMPGGRNLYKIQLTDHTNKKCLSCDLNPERCQYYSVSLSKEAKYYQLGCRGPGLPLYTLHRSTDQKELRVLEDNSALDKMLQDVQMPSKKLDFIVLNETRFWYQMILPPHFDKSKKYPLLIDVYAGPCSQKADAAFRLNWATYLASTENIIVASFDGRGSGYQGDKIMHAINKRLGTLEVEDQIEAARQFLKMGFVDSKRVAIWGWSYGGYVTSMVLGSGSGVFKCGIAVAPVSRWEYYDSVYTERYMGLPTPEDNLDHYRNSTVMSRAENFKQVEYLLIHGTADDNVHFQQSAQISKALVDAGVDFQAMWYTDEDHGIASSTAHQHIYSHMSHFLQQCFSLR.

Topologically, residues 1–6 (MKTPWK) are cytoplasmic. The helical; Signal-anchor for type II membrane protein transmembrane segment at 7-28 (VLLGLLGVAALVTIITVPVVLL) threads the bilayer. Topologically, residues 29-767 (NKDEAAADSR…HFLQQCFSLR (739 aa)) are extracellular. Asn83, Asn90, Asn148, Asn217, Asn227, and Asn319 each carry an N-linked (GlcNAc...) asparagine glycan. 4 disulfides stabilise this stretch: Cys326–Cys337, Cys383–Cys395, Cys445–Cys448, and Cys455–Cys473. Asn521 is a glycosylation site (N-linked (GlcNAc...) asparagine). Catalysis depends on Ser631, which acts as the Charge relay system. Residues Cys650 and Cys763 are joined by a disulfide bond. An N-linked (GlcNAc...) asparagine glycan is attached at Asn686. Active-site charge relay system residues include Asp709 and His741.

This sequence belongs to the peptidase S9B family. DPPIV subfamily. As to quaternary structure, monomer. Homodimer. Heterodimer with Seprase (FAP). Requires homodimerization for optimal dipeptidyl peptidase activity and T-cell costimulation. Found in a membrane raft complex, at least composed of BCL10, CARD11, DPP4 and IKBKB. Associates with collagen. Interacts with PTPRC; the interaction is enhanced in an interleukin-12-dependent manner in activated lymphocytes. Interacts (via extracellular domain) with ADA; does not inhibit its dipeptidyl peptidase activity. Interacts with CAV1 (via the N-terminus); the interaction is direct. Interacts (via cytoplasmic tail) with CARD11 (via PDZ domain); its homodimerization is necessary for interaction with CARD11. Interacts with IGF2R; the interaction is direct. Interacts with GPC3. The soluble form (Dipeptidyl peptidase 4 soluble form also named SDPP) derives from the membrane form (Dipeptidyl peptidase 4 membrane form also named MDPP) by proteolytic processing. Post-translationally, N- and O-Glycosylated. In terms of processing, phosphorylated. Mannose 6-phosphate residues in the carbohydrate moiety are necessary for interaction with IGF2R in activated T-cells. Mannose 6-phosphorylation is induced during T-cell activation. As to expression, expressed in bile ducts and other epithelial brush borders (small intestine, kidney, colon, pancreatic duct); acinar structures in salivary glands; endothelial structures and T cell areas in thymus, spleen and lymph node.

It is found in the secreted. It localises to the cell membrane. Its subcellular location is the apical cell membrane. The protein resides in the cell projection. The protein localises to the invadopodium membrane. It is found in the lamellipodium membrane. It localises to the cell junction. Its subcellular location is the membrane raft. It carries out the reaction Release of an N-terminal dipeptide, Xaa-Yaa-|-Zaa-, from a polypeptide, preferentially when Yaa is Pro, provided Zaa is neither Pro nor hydroxyproline.. Its activity is regulated as follows. Inhibited by GPC3 and diprotin A. Cell surface glycoprotein receptor involved in the costimulatory signal essential for T-cell receptor (TCR)-mediated T-cell activation. Acts as a positive regulator of T-cell coactivation, by binding at least ADA, CAV1, IGF2R, and PTPRC. Its binding to CAV1 and CARD11 induces T-cell proliferation and NF-kappa-B activation in a T-cell receptor/CD3-dependent manner. Its interaction with ADA also regulates lymphocyte-epithelial cell adhesion. In association with FAP is involved in the pericellular proteolysis of the extracellular matrix (ECM), the migration and invasion of endothelial cells into the ECM. May be involved in the promotion of lymphatic endothelial cells adhesion, migration and tube formation. When overexpressed, enhanced cell proliferation, a process inhibited by GPC3. Also acts as a serine exopeptidase with a dipeptidyl peptidase activity that regulates various physiological processes by cleaving peptides in the circulation, including many chemokines, mitogenic growth factors, neuropeptides and peptide hormones. Removes N-terminal dipeptides sequentially from polypeptides having unsubstituted N-termini provided that the penultimate residue is proline. This is Dipeptidyl peptidase 4 (Dpp4) from Rattus norvegicus (Rat).